Reading from the N-terminus, the 221-residue chain is MMAQRNSGAPDNAGGSNDGREGGRGRRDNRDDRRGGRDNAEKSNYLERVVTINRVSKVVKGGRRFSFTALVIVGDGHGLVGVGYGKAKEVPAAIAKGVDEARKNFFRVPLIGGTITHPVQGEDSAGVVMLRPASAGTGVIAGGAARAVLECAGVHDILAKSLGSDNAINVVHATVAALKQLQRPEEVAARRGLPIEDVAPAGMLRARAEFAAAAAQGGSHG.

The segment at 1–40 is disordered; sequence MMAQRNSGAPDNAGGSNDGREGGRGRRDNRDDRRGGRDNA. Basic and acidic residues predominate over residues 18-40; sequence DGREGGRGRRDNRDDRRGGRDNA. The S5 DRBM domain occupies 45 to 108; it reads YLERVVTINR…DEARKNFFRV (64 aa).

This sequence belongs to the universal ribosomal protein uS5 family. As to quaternary structure, part of the 30S ribosomal subunit. Contacts proteins S4 and S8.

Functionally, with S4 and S12 plays an important role in translational accuracy. Located at the back of the 30S subunit body where it stabilizes the conformation of the head with respect to the body. The chain is Small ribosomal subunit protein uS5 from Mycobacteroides abscessus (strain ATCC 19977 / DSM 44196 / CCUG 20993 / CIP 104536 / JCM 13569 / NCTC 13031 / TMC 1543 / L948) (Mycobacterium abscessus).